The primary structure comprises 176 residues: ATP-dependent protease subunit HslV (176 aa).

The active site involves Thr-4. Na(+) contacts are provided by Ala-159, Cys-162, and Thr-165.

This sequence belongs to the peptidase T1B family. HslV subfamily. As to quaternary structure, a double ring-shaped homohexamer of HslV is capped on each side by a ring-shaped HslU homohexamer. The assembly of the HslU/HslV complex is dependent on binding of ATP.

The protein resides in the cytoplasm. It carries out the reaction ATP-dependent cleavage of peptide bonds with broad specificity.. With respect to regulation, allosterically activated by HslU binding. Functionally, protease subunit of a proteasome-like degradation complex believed to be a general protein degrading machinery. In Wolbachia sp. subsp. Brugia malayi (strain TRS), this protein is ATP-dependent protease subunit HslV.